Reading from the N-terminus, the 278-residue chain is Large ribosomal subunit protein uL2 (278 aa).

Disordered regions lie at residues 29 to 57 (PEKS…QGGG) and 224 to 278 (VAMN…NKKR). Basic residues predominate over residues 258–278 (RSPKKASNKYIVRRRKTNKKR).

The protein belongs to the universal ribosomal protein uL2 family. Part of the 50S ribosomal subunit. Forms a bridge to the 30S subunit in the 70S ribosome.

One of the primary rRNA binding proteins. Required for association of the 30S and 50S subunits to form the 70S ribosome, for tRNA binding and peptide bond formation. It has been suggested to have peptidyltransferase activity; this is somewhat controversial. Makes several contacts with the 16S rRNA in the 70S ribosome. The protein is Large ribosomal subunit protein uL2 of Streptomyces griseus subsp. griseus (strain JCM 4626 / CBS 651.72 / NBRC 13350 / KCC S-0626 / ISP 5235).